The sequence spans 900 residues: Phospholipase DDHD1 (900 aa).

3 disordered regions span residues Met-1 to Ser-28, Leu-100 to Ala-152, and Gly-202 to Arg-233. A phosphoserine mark is found at Ser-8 and Ser-11. The span at Ser-130–Pro-140 shows a compositional bias: gly residues. Residue Ser-537 is part of the active site. The DDHD domain occupies Leu-611–Lys-886. Disordered regions lie at residues Ala-706–Val-725 and Ser-768–Leu-801. Over residues Thr-710–Val-725 the composition is skewed to polar residues. Ser-723 carries the phosphoserine modification. A compositionally biased stretch (basic and acidic residues) spans Thr-776 to Pro-787. Polar residues predominate over residues Pro-791–Leu-801.

Belongs to the PA-PLA1 family. As to quaternary structure, forms homooligomers and, to a much smaller extent, heterooligomers with DDHD2. In terms of tissue distribution, highly expressed in testis. Also expressed in brain, spleen and lung. Only expressed in cerebellum in fetal brain.

The protein resides in the cytoplasm. It catalyses the reaction a 1,2-diacyl-sn-glycero-3-phosphate + H2O = a 2-acyl-sn-glycerol 3-phosphate + a fatty acid + H(+). The catalysed reaction is a 1,2-diacyl-sn-glycero-3-phospho-(1D-myo-inositol) + H2O = a 2-acyl-sn-glycero-3-phospho-D-myo-inositol + a fatty acid + H(+). The enzyme catalyses 1-octadecanoyl-2-(5Z,8Z,11Z,14Z-eicosatetraenoyl)-sn-glycero-3-phospho-(1D-myo-inositol) + H2O = 2-(5Z,8Z,11Z,14Z-eicosatetraenoyl)-sn-glycero-3-phospho-(1D-myo-inositol) + octadecanoate + H(+). It carries out the reaction a 1-acyl-2-(5Z,8Z,11Z,14Z-eicosatetraenoyl)-sn-glycero-3-phospho-(1D-myo-inositol) + H2O = 2-(5Z,8Z,11Z,14Z-eicosatetraenoyl)-sn-glycero-3-phospho-(1D-myo-inositol) + a fatty acid + H(+). It catalyses the reaction 1,2-dihexadecanoyl-sn-glycero-3-phospho-(1D-myo-inositol) + H2O = 2-hexadecanoyl-sn-glycero-3-phospho-(1D-myo-inositol) + hexadecanoate + H(+). The catalysed reaction is a 1-acyl-2-(5Z,8Z,11Z,14Z)-eicosatetraenoyl-sn-glycero-3-phosphate + H2O = 2-(5Z,8Z,11Z,14Z-eicosatetraenoyl)-sn-glycero-3-phosphate + a fatty acid + H(+). The enzyme catalyses 1,2-di-(9Z-octadecenoyl)-sn-glycero-3-phosphate + H2O = 2-(9Z-octadecenoyl)-sn-glycero-3-phosphate + (9Z)-octadecenoate + H(+). It carries out the reaction 1-hexadecanoyl-2-(9Z-octadecenoyl)-sn-glycero-3-phosphate + H2O = 2-(9Z-octadecenoyl)-sn-glycero-3-phosphate + hexadecanoate + H(+). It catalyses the reaction 1-hexadecanoyl-2-(9Z-octadecenoyl)-sn-glycero-3-phospho-L-serine + H2O = 2-(9Z-octadecenoyl)-sn-glycero-3-phospho-L-serine + hexadecanoate + H(+). The catalysed reaction is 1,2-di-(5Z,8Z,11Z,14Z)-eicosatetraenoyl-sn-glycero-3-phosphate + H2O = 2-(5Z,8Z,11Z,14Z-eicosatetraenoyl)-sn-glycero-3-phosphate + (5Z,8Z,11Z,14Z)-eicosatetraenoate + H(+). The enzyme catalyses 1-octadecanoyl-2-(5Z,8Z,11Z,14Z-eicosatetraenoyl)-sn-glycero-3-phosphate + H2O = 2-(5Z,8Z,11Z,14Z-eicosatetraenoyl)-sn-glycero-3-phosphate + octadecanoate + H(+). It carries out the reaction a 1,2-diacyl-sn-glycero-3-phosphocholine + H2O = a 2-acyl-sn-glycero-3-phosphocholine + a fatty acid + H(+). It catalyses the reaction a 1,2-diacyl-sn-glycero-3-phosphoethanolamine + H2O = a 2-acyl-sn-glycero-3-phosphoethanolamine + a fatty acid + H(+). The catalysed reaction is a 1,2-diacyl-sn-glycero-3-phospho-L-serine + H2O = a 2-acyl-sn-glycero-3-phospho-L-serine + a fatty acid + H(+). The enzyme catalyses a 1,2-diacyl-sn-glycero-3-phospho-(1'-sn-glycerol) + H2O = 2-acyl-sn-glycero-3-phospho-(1'-sn-glycerol) + a fatty acid + H(+). It carries out the reaction 1-hexadecanoyl-2-(9Z-octadecenoyl)-sn-glycero-3-phospho-(1'-sn-glycerol) + H2O = 2-(9Z-octadecenoyl)-sn-glycero-3-phospho-(1'-sn-glycerol) + hexadecanoate + H(+). It catalyses the reaction 1-acyl-2-(5Z,8Z,11Z,14Z-eicosatetraenoyl)-sn-glycero-3-phosphocholine + H2O = 2-(5Z,8Z,11Z,14Z)-eicosatetraenoyl-sn-glycero-3-phosphocholine + a fatty acid + H(+). The catalysed reaction is 1-acyl-2-(5Z,8Z,11Z,14Z)-eicosatetraenoyl-sn-glycero-3-phosphoethanolamine + H2O = 2-(5Z,8Z,11Z,14Z)-eicosatetraenoyl-sn-glycero-3-phosphoethanolamine + a fatty acid + H(+). The enzyme catalyses 1-(9Z-octadecenoyl)-2-(7Z,10Z,13Z,16Z,19Z-docosapentaenoyl)-sn-glycero-3-phospho-1D-myo-inositol + H2O = 2-(7Z,10Z,13Z,16Z,19Z-docosapentaenoyl)-sn-glycero-3-phospho-1D-myo-inositol + (9Z)-octadecenoate + H(+). It carries out the reaction 1-(9Z-octadecenoyl)-2-(5Z,8Z,11Z,14Z-eicosatetraenoyl)-sn-glycero-3-phospho-1D-myo-inositol + H2O = 2-(5Z,8Z,11Z,14Z-eicosatetraenoyl)-sn-glycero-3-phospho-(1D-myo-inositol) + (9Z)-octadecenoate + H(+). It catalyses the reaction 1,2-di-(9Z-octadecenoyl)-sn-glycero-3-phospho-1D-myo-inositol + H2O = 2-(9Z-octadecenoyl)-sn-glycero-3-phospho-1D-myo-inositol + (9Z)-octadecenoate + H(+). The catalysed reaction is 1-(9Z-octadecenoyl)-2-(8Z,11Z,14Z-eicosatrienoyl)-sn-glycero-3-phospho-1D-myo-inositol + H2O = 2-(8Z,11Z,14Z-eicosatrienoyl)-sn-glycero-3-phospho-1D-myo-inositol + (9Z)-octadecenoate + H(+). The enzyme catalyses 1,2-di-(9Z-octadecenoyl)-sn-glycero-3-phosphocholine + H2O = (9Z-octadecenoyl)-sn-glycero-3-phosphocholine + (9Z)-octadecenoate + H(+). It functions in the pathway phospholipid metabolism; phosphatidylinositol metabolism. Phosphatidate (1,2-diacyl-sn-glycero-3-phosphate, PA) can positively regulate phospholipase A1 activity. Functionally, phospholipase A1 (PLA1) that hydrolyzes ester bonds at the sn-1 position of glycerophospholipids producing a free fatty acid and a lysophospholipid. Prefers phosphatidate (1,2-diacyl-sn-glycero-3-phosphate, PA) as substrate in vitro, but can efficiently hydrolyze phosphatidylinositol (1,2-diacyl-sn-glycero-3-phospho-(1D-myo-inositol), PI), as well as a range of other glycerophospholipid substrates such as phosphatidylcholine (1,2-diacyl-sn-glycero-3-phosphocholine, PC), phosphatidylethanolamine (1,2-diacyl-sn-glycero-3-phosphoethanolamine, PE), phosphatidylserine (1,2-diacyl-sn-glycero-3-phospho-L-serine, PS) and phosphatidylglycerol (1,2-diacyl-sn-glycero-3-phospho-(1'-sn-glycerol), PG). Involved in the regulation of the endogenous content of polyunsaturated PI and PS lipids in the nervous system. Changes in these lipids extend to downstream metabolic products like PI phosphates PIP and PIP2, which play fundamental roles in cell biology. Regulates mitochondrial morphology. These dynamic changes may be due to PA hydrolysis at the mitochondrial surface. May play a regulatory role in spermatogenesis or sperm function. The sequence is that of Phospholipase DDHD1 from Homo sapiens (Human).